We begin with the raw amino-acid sequence, 351 residues long: Ferrochelatase (351 aa).

Fe cation-binding residues include His-184 and Glu-265.

Belongs to the ferrochelatase family.

It localises to the cytoplasm. The enzyme catalyses heme b + 2 H(+) = protoporphyrin IX + Fe(2+). The protein operates within porphyrin-containing compound metabolism; protoheme biosynthesis; protoheme from protoporphyrin-IX: step 1/1. Its function is as follows. Catalyzes the ferrous insertion into protoporphyrin IX. This Rhodopirellula baltica (strain DSM 10527 / NCIMB 13988 / SH1) protein is Ferrochelatase.